Here is a 677-residue protein sequence, read N- to C-terminus: UvrABC system protein B (677 aa).

A Helicase ATP-binding domain is found at 25–412; the sequence is DGVNSGREYQ…SGAIIEQVIR (388 aa). ATP is bound at residue 38–45; it reads GATGTGKT. Residues 91-114 carry the Beta-hairpin motif; it reads YYDYYQPEAYVPVSDTYIAKTSSI. The 163-residue stretch at 429–591 folds into the Helicase C-terminal domain; that stretch reads QVEDLLDEIR…IVPMPAGKKA (163 aa). The UVR domain maps to 639–674; sequence PQLIDELETKMKKSAKDLDFENAAKLRDKIHQLRKK.

This sequence belongs to the UvrB family. As to quaternary structure, forms a heterotetramer with UvrA during the search for lesions. Interacts with UvrC in an incision complex.

It localises to the cytoplasm. Its function is as follows. The UvrABC repair system catalyzes the recognition and processing of DNA lesions. A damage recognition complex composed of 2 UvrA and 2 UvrB subunits scans DNA for abnormalities. Upon binding of the UvrA(2)B(2) complex to a putative damaged site, the DNA wraps around one UvrB monomer. DNA wrap is dependent on ATP binding by UvrB and probably causes local melting of the DNA helix, facilitating insertion of UvrB beta-hairpin between the DNA strands. Then UvrB probes one DNA strand for the presence of a lesion. If a lesion is found the UvrA subunits dissociate and the UvrB-DNA preincision complex is formed. This complex is subsequently bound by UvrC and the second UvrB is released. If no lesion is found, the DNA wraps around the other UvrB subunit that will check the other stand for damage. The polypeptide is UvrABC system protein B (Prochlorococcus marinus (strain SARG / CCMP1375 / SS120)).